The primary structure comprises 163 residues: Large ribosomal subunit protein uL11 (163 aa).

Positions 1–26 (MAETIEVLVAGGQADPGPPLGPELGP) are disordered.

The protein belongs to the universal ribosomal protein uL11 family. As to quaternary structure, part of the ribosomal stalk of the 50S ribosomal subunit. Interacts with L10 and the large rRNA to form the base of the stalk. L10 forms an elongated spine to which L12 dimers bind in a sequential fashion forming a multimeric L10(L12)X complex.

Its function is as follows. Forms part of the ribosomal stalk which helps the ribosome interact with GTP-bound translation factors. This is Large ribosomal subunit protein uL11 from Halobacterium salinarum (strain ATCC 29341 / DSM 671 / R1).